Consider the following 397-residue polypeptide: SET domain-containing protein 4 (397 aa).

The 217-residue stretch at 29–245 folds into the SET domain; it reads AKLEPCRFKE…KCSEVFINYG (217 aa). Y244 serves as a coordination point for S-adenosyl-L-methionine.

This sequence belongs to the class V-like SAM-binding methyltransferase superfamily. SETD4 family.

It localises to the nucleus. It catalyses the reaction L-lysyl(79)-[histone H3] + 3 S-adenosyl-L-methionine = N(6),N(6),N(6)-trimethyl-L-lysyl(79)-[histone H3] + 3 S-adenosyl-L-homocysteine + 3 H(+). The enzyme catalyses L-lysyl(20)-[histone H4] + S-adenosyl-L-methionine = N(6)-methyl-L-lysyl(20)-[histone H4] + S-adenosyl-L-homocysteine + H(+). The catalysed reaction is N(6)-methyl-L-lysyl(20)-[histone H4] + S-adenosyl-L-methionine = N(6),N(6)-dimethyl-L-lysyl(20)-[histone H4] + S-adenosyl-L-homocysteine + H(+). It carries out the reaction N(6),N(6)-dimethyl-L-lysyl(20)-[histone H4] + S-adenosyl-L-methionine = N(6),N(6),N(6)-trimethyl-L-lysyl(20)-[histone H4] + S-adenosyl-L-homocysteine + H(+). Functionally, protein-lysine N-methyltransferase involved in the regulation of cell quiescence by catalyzing the trimethylation of 'Lys-20' of histone H4 and 'Lys-79' of histone H3 (H4K20me3 and H3K79me3, respectively) during diapause formation, a state of obligate dormancy. The protein is SET domain-containing protein 4 of Artemia parthenogenetica (Brine shrimp).